A 676-amino-acid chain; its full sequence is Ion-translocating oxidoreductase complex subunit C (676 aa).

2 4Fe-4S ferredoxin-type domains span residues 369–397 (GEPQ…QQLY) and 407–436 (KATT…VQYF). Positions 377, 380, 383, 387, 416, 419, 422, and 426 each coordinate [4Fe-4S] cluster. The disordered stretch occupies residues 600–652 (ARKLEQQQANAEPEQQVDPRKAAVEAAIARAKARKLEQQQANAEPEEQVDPRK). A compositionally biased stretch (low complexity) spans 605–615 (QQQANAEPEQQ).

This sequence belongs to the 4Fe4S bacterial-type ferredoxin family. RnfC subfamily. As to quaternary structure, the complex is composed of six subunits: RsxA, RsxB, RsxC, RsxD, RsxE and RsxG. The cofactor is [4Fe-4S] cluster.

It is found in the cell inner membrane. In terms of biological role, part of a membrane-bound complex that couples electron transfer with translocation of ions across the membrane. Required to maintain the reduced state of SoxR. This is Ion-translocating oxidoreductase complex subunit C from Escherichia coli (strain SMS-3-5 / SECEC).